Consider the following 159-residue polypeptide: Ribosomal RNA large subunit methyltransferase H (159 aa).

S-adenosyl-L-methionine is bound by residues L76, G108, and 127–132; that span reads FSKMTF.

Belongs to the RNA methyltransferase RlmH family. As to quaternary structure, homodimer.

The protein localises to the cytoplasm. It catalyses the reaction pseudouridine(1915) in 23S rRNA + S-adenosyl-L-methionine = N(3)-methylpseudouridine(1915) in 23S rRNA + S-adenosyl-L-homocysteine + H(+). Specifically methylates the pseudouridine at position 1915 (m3Psi1915) in 23S rRNA. The chain is Ribosomal RNA large subunit methyltransferase H from Clostridium botulinum (strain Eklund 17B / Type B).